The primary structure comprises 192 residues: Leucine-rich repeat-containing protein 51 (192 aa).

3 LRR repeats span residues 49 to 71 (SLTQSLWLNNNVLNDLRDFNQVA), 80 to 101 (NLAWIDLSFNDLTSIDPVLTTF), and 103 to 124 (NLSVLYLHGNSIQHLGEVNKLA). The region spanning 137-175 (NPMEEEKGYRQYVLCTLPHITTFDFSGVTKADRTTAEVW) is the LRRCT domain.

It is found in the cytoplasm. This Macaca mulatta (Rhesus macaque) protein is Leucine-rich repeat-containing protein 51.